The sequence spans 501 residues: Dihydrolipoyl dehydrogenase, mitochondrial (501 aa).

The N-terminal 31 residues, 1–31, are a transit peptide targeting the mitochondrion; the sequence is MAMANLARRKGYSLLSSETLRYSFSLRSRAF. FAD contacts are provided by residues 67 to 76, lysine 85, glycine 149, and 178 to 180; these read EKRGALGGTC and TGS. The cysteines at positions 76 and 81 are disulfide-linked. NAD(+)-binding positions include 215 to 222, glutamate 238, valine 272, and glycine 307; that span reads GAGYIGLE. FAD is bound by residues aspartate 348 and 354-357; that span reads MLAH. The active-site Proton acceptor is histidine 480.

The protein belongs to the class-I pyridine nucleotide-disulfide oxidoreductase family. As to quaternary structure, homodimer. FAD is required as a cofactor.

It is found in the mitochondrion matrix. The catalysed reaction is N(6)-[(R)-dihydrolipoyl]-L-lysyl-[protein] + NAD(+) = N(6)-[(R)-lipoyl]-L-lysyl-[protein] + NADH + H(+). Lipoamide dehydrogenase is a component of the glycine cleavage system as well as of the alpha-ketoacid dehydrogenase complexes. The pyruvate dehydrogenase complex contains multiple copies of three enzymatic components: pyruvate dehydrogenase (E1), dihydrolipoamide acetyltransferase (E2) and lipoamide dehydrogenase (E3). In Pisum sativum (Garden pea), this protein is Dihydrolipoyl dehydrogenase, mitochondrial (LPD).